The sequence spans 194 residues: Holliday junction branch migration complex subunit RuvA (194 aa).

A domain I region spans residues 1-64; that stretch reads MIARLSGILV…EDAQLLYGFG (64 aa). The interval 65–141 is domain II; that stretch reads SDQERATFRQ…FAIDGGTALA (77 aa). The interval 141–144 is flexible linker; the sequence is AGSN. Residues 145–194 are domain III; that stretch reads PAKSASSDVLNALLALGYNEREALAAVKQLPADIAVAEGIKLSLKSLSKT.

The protein belongs to the RuvA family. As to quaternary structure, homotetramer. Forms an RuvA(8)-RuvB(12)-Holliday junction (HJ) complex. HJ DNA is sandwiched between 2 RuvA tetramers; dsDNA enters through RuvA and exits via RuvB. An RuvB hexamer assembles on each DNA strand where it exits the tetramer. Each RuvB hexamer is contacted by two RuvA subunits (via domain III) on 2 adjacent RuvB subunits; this complex drives branch migration. In the full resolvosome a probable DNA-RuvA(4)-RuvB(12)-RuvC(2) complex forms which resolves the HJ.

It localises to the cytoplasm. In terms of biological role, the RuvA-RuvB-RuvC complex processes Holliday junction (HJ) DNA during genetic recombination and DNA repair, while the RuvA-RuvB complex plays an important role in the rescue of blocked DNA replication forks via replication fork reversal (RFR). RuvA specifically binds to HJ cruciform DNA, conferring on it an open structure. The RuvB hexamer acts as an ATP-dependent pump, pulling dsDNA into and through the RuvAB complex. HJ branch migration allows RuvC to scan DNA until it finds its consensus sequence, where it cleaves and resolves the cruciform DNA. This is Holliday junction branch migration complex subunit RuvA from Methylobacillus flagellatus (strain ATCC 51484 / DSM 6875 / VKM B-1610 / KT).